We begin with the raw amino-acid sequence, 339 residues long: 5-dehydro-2-deoxygluconokinase (339 aa).

Belongs to the carbohydrate kinase PfkB family.

It catalyses the reaction 5-dehydro-2-deoxy-D-gluconate + ATP = 6-phospho-5-dehydro-2-deoxy-D-gluconate + ADP + H(+). It functions in the pathway polyol metabolism; myo-inositol degradation into acetyl-CoA; acetyl-CoA from myo-inositol: step 5/7. Catalyzes the phosphorylation of 5-dehydro-2-deoxy-D-gluconate (2-deoxy-5-keto-D-gluconate or DKG) to 6-phospho-5-dehydro-2-deoxy-D-gluconate (DKGP). The polypeptide is 5-dehydro-2-deoxygluconokinase (Clostridium botulinum (strain Eklund 17B / Type B)).